Consider the following 749-residue polypeptide: MVLPTVLILLLSWAAGLGGQYGNPLNKYIRHYEGLSYNVDSLHQKHQRAKRAVSHEDQFLLLDFHAHGRQFNLRMKRDTSLFSDEFKVETSNKVLDYDTSHIYTGHIYGEEGSFSHGSVIDGRFEGFIKTRGGTFYIEPAERYIKDRILPFHSVIYHEDDINYPHKYGPQGGCADHSVFERMRKYQMTGVEEGARAHPEKHAASSGPELLRKKRTTLAERNTCQLYIQTDHLFFKYYGTREAVIAQISSHVKAIDTIYQTTDFSGIRNISFMVKRIRINTTSDEKDPTNPFRFPNIGVEKFLELNSEQNHDDYCLAYVFTDRDFDDGVLGLAWVGAPSGSSGGICEKSKLYSDGKKKSLNTGIITVQNYGSHVPPKVSHITFAHEVGHNFGSPHDSGTECTPGESKNLGQKENGNYIMYARATSGDKLNNNKFSLCSIRNISQVLEKKRNNCFVESGQPICGNGMVEQGEECDCGYSDQCKDDCCFDANQPEGKKCKLKPGKQCSPSQGPCCTAQCAFKSKSEKCRDDSDCAKEGICNGFTALCPASDPKPNFTDCNRHTQVCINGQCAGSICEKYDLEECTCASSDGKDDKELCHVCCMKKMAPSTCASTGSLQWSKQFSGRTITLQPGSPCNDFRGYCDVFMRCRLVDADGPLARLKKAIFSPQLYENIAEWIVAHWWAVLLMGIALIMLMAGFIKICSVHTPSSNPKLPPPKPLPGTLKRRRPPQPIQQPPRQRPRESYQMGHMRR.

The N-terminal stretch at 1–19 (MVLPTVLILLLSWAAGLGG) is a signal peptide. Residues 20-214 (QYGNPLNKYI…SGPELLRKKR (195 aa)) constitute a propeptide that is removed on maturation. Residues 20 to 673 (QYGNPLNKYI…SPQLYENIAE (654 aa)) lie on the Extracellular side of the membrane. Residues 171-178 (GGCADHSV) carry the Cysteine switch motif. Cys-173 provides a ligand contact to Zn(2+). Residues 221–457 (NTCQLYIQTD…KRNNCFVESG (237 aa)) enclose the Peptidase M12B domain. Disulfide bonds link Cys-223-Cys-314, Cys-345-Cys-452, Cys-400-Cys-436, Cys-461-Cys-496, Cys-472-Cys-485, Cys-474-Cys-480, Cys-484-Cys-516, Cys-504-Cys-512, Cys-511-Cys-537, Cys-525-Cys-544, Cys-531-Cys-563, Cys-556-Cys-568, Cys-573-Cys-599, Cys-581-Cys-608, Cys-583-Cys-598, Cys-595-Cys-640, and Cys-633-Cys-646. 2 N-linked (GlcNAc...) asparagine glycosylation sites follow: Asn-268 and Asn-279. His-384 contributes to the Zn(2+) binding site. Glu-385 is a catalytic residue. Zn(2+)-binding residues include His-388 and His-394. N-linked (GlcNAc...) asparagine glycosylation is present at Asn-440. Residues 458-552 (QPICGNGMVE…LCPASDPKPN (95 aa)) enclose the Disintegrin domain. Residue Asn-552 is glycosylated (N-linked (GlcNAc...) asparagine). The helical transmembrane segment at 674 to 694 (WIVAHWWAVLLMGIALIMLMA) threads the bilayer. Residues 695–749 (GFIKICSVHTPSSNPKLPPPKPLPGTLKRRRPPQPIQQPPRQRPRESYQMGHMRR) lie on the Cytoplasmic side of the membrane. Positions 705–749 (PSSNPKLPPPKPLPGTLKRRRPPQPIQQPPRQRPRESYQMGHMRR) are disordered. Positions 709–716 (PKLPPPKP) match the SH3-binding motif. Thr-720 is subject to Phosphothreonine. The SH3-binding motif lies at 723–729 (RRRPPQP). An interaction with AP2A1, AP2A2 and AP2M1 region spans residues 735–749 (RQRPRESYQMGHMRR).

As to quaternary structure, forms a ternary EFNA5-EPHA3-ADAM10 complex mediating EFNA5 extracellular domain shedding by ADAM10 which regulates the EFNA5-EPHA3 complex internalization and function, the cleavage occurs in trans, with ADAM10 and its substrate being on the membranes of opposing cells. Interacts with the clathrin adapter AP2 complex subunits AP2A1, AP2A2, AP2B1, and AP2M1; this interaction facilitates ADAM10 endocytosis from the plasma membrane during long-term potentiation in hippocampal neurons. Forms a ternary complex composed of ADAM10, EPHA4 and CADH1; within the complex, ADAM10 cleaves CADH1 which disrupts adherens junctions. Interacts with EPHA2. Interacts with NGF in a divalent cation-dependent manner. Interacts with TSPAN14; the interaction promotes ADAM10 maturation and cell surface expression. Interacts with TSPAN5, TSPAN10, TSPAN14, TSPAN15, TSPAN17 and TSPAN33; these interactions regulate ADAM10 substrate specificity, endocytosis and turnover. Interacts (via extracellular domain) with TSPAN33 (via extracellular domain) and (via cytoplasmic domain) with AFDN; interaction with TSPAN33 allows the docking of ADAM10 to zonula adherens through a PDZ11-dependent interaction between TSPAN33 and PLEKHA7 while interaction with AFDN locks ADAM10 at zonula adherens. Interacts with DLG1; this interaction recruits ADAM10 to the cell membrane during long-term depression in hippocampal neurons. Interacts (via extracellular domain) with BACE1 (via extracellular domain). Interacts with FAM171A1. It depends on Zn(2+) as a cofactor. In terms of processing, the precursor is cleaved by furin and PCSK7. As to expression, expressed in the brain, specifically in neurons and astrocytes (at protein level). Expressed in inner and outer pillar cells of the organ of Corti (at protein level). Expressed in kidney and lung.

The protein resides in the cell membrane. The protein localises to the golgi apparatus membrane. Its subcellular location is the cytoplasmic vesicle. It is found in the clathrin-coated vesicle. It localises to the cell projection. The protein resides in the axon. The protein localises to the dendrite. Its subcellular location is the cell junction. It is found in the adherens junction. It localises to the cytoplasm. The catalysed reaction is Endopeptidase of broad specificity.. Its activity is regulated as follows. Catalytically inactive when the propeptide is intact and associated with the mature enzyme. The disintegrin and cysteine-rich regions modulate access of substrates to exerts an inhibitory effect on the cleavage of ADAM10 substrates. Its function is as follows. Transmembrane metalloprotease which mediates the ectodomain shedding of a myriad of transmembrane proteins, including adhesion proteins, growth factor precursors and cytokines being essential for development and tissue homeostasis. Associates with six members of the tetraspanin superfamily TspanC8 which regulate its exit from the endoplasmic reticulum and its substrate selectivity. Cleaves the membrane-bound precursor of TNF-alpha to its mature soluble form. Responsible for the proteolytical release of soluble JAM3 from endothelial cells surface. Responsible for the proteolytic release of several other cell-surface proteins, including heparin-binding epidermal growth-like factor, ephrin-A2, CD44, CDH2 and for constitutive and regulated alpha-secretase cleavage of amyloid precursor protein (APP) at '687-Lys-|-Leu-688'. Contributes to the normal cleavage of the cellular prion protein. Involved in the cleavage of the adhesion molecule L1 at the cell surface and in released membrane vesicles, suggesting a vesicle-based protease activity. Also controls the proteolytic processing of Notch and mediates lateral inhibition during neurogenesis. Required for the development of type 1 transitional B cells into marginal zone B cells, probably by cleaving Notch. Responsible for the FasL ectodomain shedding and for the generation of the remnant ADAM10-processed FasL (FasL APL) transmembrane form. Also cleaves the ectodomain of the integral membrane proteins CORIN and ITM2B. Mediates the proteolytic cleavage of LAG3, leading to release the secreted form of LAG3. Mediates the proteolytic cleavage of IL6R and IL11RA, leading to the release of secreted forms of IL6R and IL11RA. Enhances the cleavage of CHL1 by BACE1. Cleaves NRCAM. Cleaves TREM2, resulting in shedding of the TREM2 ectodomain. Involved in the development and maturation of glomerular and coronary vasculature. During development of the cochlear organ of Corti, promotes pillar cell separation by forming a ternary complex with CADH1 and EPHA4 and cleaving CADH1 at adherens junctions. May regulate the EFNA5-EPHA3 signaling. The polypeptide is Disintegrin and metalloproteinase domain-containing protein 10 (Adam10) (Mus musculus (Mouse)).